A 273-amino-acid polypeptide reads, in one-letter code: Shikimate kinase (273 aa).

An ATP-binding site is contributed by 85–95 (PVGKGLKSSSA).

It belongs to the GHMP kinase family. Archaeal shikimate kinase subfamily.

The protein resides in the cytoplasm. It carries out the reaction shikimate + ATP = 3-phosphoshikimate + ADP + H(+). It participates in metabolic intermediate biosynthesis; chorismate biosynthesis; chorismate from D-erythrose 4-phosphate and phosphoenolpyruvate: step 5/7. This is Shikimate kinase from Pyrococcus furiosus (strain ATCC 43587 / DSM 3638 / JCM 8422 / Vc1).